Here is a 79-residue protein sequence, read N- to C-terminus: Cytoinsectotoxin-3 (79 aa).

This sequence belongs to the cationic peptide 06 (cytoinsectotoxin) family. As to expression, expressed by the venom gland.

The protein localises to the secreted. Its function is as follows. Insecticidal and antimicrobial peptide. Has insecticidal activity against larvae of flesh fly S.carnaria. Has antibacterial activity against Gram-positive bacterium B.subtilis B-501 (MIC=0.63 uM) and Gram-negative bacterium E.coli DH5alpha (MIC=2.5 uM). The protein is Cytoinsectotoxin-3 of Lachesana tarabaevi (Spider).